The chain runs to 617 residues: Dihydroxy-acid dehydratase (617 aa).

Residue Asp81 participates in Mg(2+) binding. Residue Cys122 participates in [2Fe-2S] cluster binding. Asp123 and Lys124 together coordinate Mg(2+). Lys124 is subject to N6-carboxylysine. Residue Cys195 participates in [2Fe-2S] cluster binding. Glu491 is a Mg(2+) binding site. Ser517 (proton acceptor) is an active-site residue.

The protein belongs to the IlvD/Edd family. In terms of assembly, homodimer. The cofactor is [2Fe-2S] cluster. Mg(2+) is required as a cofactor.

The catalysed reaction is (2R)-2,3-dihydroxy-3-methylbutanoate = 3-methyl-2-oxobutanoate + H2O. It carries out the reaction (2R,3R)-2,3-dihydroxy-3-methylpentanoate = (S)-3-methyl-2-oxopentanoate + H2O. It functions in the pathway amino-acid biosynthesis; L-isoleucine biosynthesis; L-isoleucine from 2-oxobutanoate: step 3/4. It participates in amino-acid biosynthesis; L-valine biosynthesis; L-valine from pyruvate: step 3/4. Functions in the biosynthesis of branched-chain amino acids. Catalyzes the dehydration of (2R,3R)-2,3-dihydroxy-3-methylpentanoate (2,3-dihydroxy-3-methylvalerate) into 2-oxo-3-methylpentanoate (2-oxo-3-methylvalerate) and of (2R)-2,3-dihydroxy-3-methylbutanoate (2,3-dihydroxyisovalerate) into 2-oxo-3-methylbutanoate (2-oxoisovalerate), the penultimate precursor to L-isoleucine and L-valine, respectively. This is Dihydroxy-acid dehydratase from Nitrosococcus oceani (strain ATCC 19707 / BCRC 17464 / JCM 30415 / NCIMB 11848 / C-107).